The primary structure comprises 475 residues: ATP synthase subunit beta (475 aa).

Position 152-159 (152-159) interacts with ATP; the sequence is GGAGVGKT.

It belongs to the ATPase alpha/beta chains family. F-type ATPases have 2 components, CF(1) - the catalytic core - and CF(0) - the membrane proton channel. CF(1) has five subunits: alpha(3), beta(3), gamma(1), delta(1), epsilon(1). CF(0) has three main subunits: a(1), b(2) and c(9-12). The alpha and beta chains form an alternating ring which encloses part of the gamma chain. CF(1) is attached to CF(0) by a central stalk formed by the gamma and epsilon chains, while a peripheral stalk is formed by the delta and b chains.

Its subcellular location is the cell membrane. The enzyme catalyses ATP + H2O + 4 H(+)(in) = ADP + phosphate + 5 H(+)(out). Produces ATP from ADP in the presence of a proton gradient across the membrane. The catalytic sites are hosted primarily by the beta subunits. This chain is ATP synthase subunit beta, found in Wolbachia pipientis wMel.